The following is a 229-amino-acid chain: Transcriptional activator protein YukR (229 aa).

The 66-residue stretch at 157–222 (DTSGKGILSP…QAIRLGVELE (66 aa)) folds into the HTH luxR-type domain. Positions 181–200 (YPEIALIAGITTRTVKHHMG) form a DNA-binding region, H-T-H motif.

Belongs to the autoinducer-regulated transcriptional regulatory protein family.

Probable transcriptional activator. Binds to an autoinducer molecule. In Yersinia ruckeri, this protein is Transcriptional activator protein YukR (yukR).